A 398-amino-acid polypeptide reads, in one-letter code: Bone morphogenetic protein 2-B (398 aa).

Residues 1–23 form the signal peptide; sequence MVAGIHSLLLLQFYQILLSGCTG. Residues 24 to 284 constitute a propeptide that is removed on maturation; sequence LVPEEGKRKY…GHALHKRQKR (261 aa). N-linked (GlcNAc...) asparagine glycosylation is found at asparagine 137, asparagine 202, asparagine 237, and asparagine 340. Cystine bridges form between cysteine 298–cysteine 363, cysteine 327–cysteine 395, and cysteine 331–cysteine 397.

Belongs to the TGF-beta family. Homodimer; disulfide-linked.

Its subcellular location is the secreted. In terms of biological role, induces cartilage and bone formation. This is Bone morphogenetic protein 2-B (bmp2-b) from Xenopus laevis (African clawed frog).